Here is a 157-residue protein sequence, read N- to C-terminus: 2-C-methyl-D-erythritol 2,4-cyclodiphosphate synthase (157 aa).

The a divalent metal cation site is built by Asp-8 and His-10. 4-CDP-2-C-methyl-D-erythritol 2-phosphate contacts are provided by residues 8-10 and 34-35; these read DVH and HS. A divalent metal cation is bound at residue His-42. 4-CDP-2-C-methyl-D-erythritol 2-phosphate is bound by residues 56–58, 61–65, 100–106, 132–135, and Phe-139; these read DIG, FPDTD, AQKPKMA, and TTEE.

The protein belongs to the IspF family. Homotrimer. Requires a divalent metal cation as cofactor.

The enzyme catalyses 4-CDP-2-C-methyl-D-erythritol 2-phosphate = 2-C-methyl-D-erythritol 2,4-cyclic diphosphate + CMP. Its pathway is isoprenoid biosynthesis; isopentenyl diphosphate biosynthesis via DXP pathway; isopentenyl diphosphate from 1-deoxy-D-xylulose 5-phosphate: step 4/6. Involved in the biosynthesis of isopentenyl diphosphate (IPP) and dimethylallyl diphosphate (DMAPP), two major building blocks of isoprenoid compounds. Catalyzes the conversion of 4-diphosphocytidyl-2-C-methyl-D-erythritol 2-phosphate (CDP-ME2P) to 2-C-methyl-D-erythritol 2,4-cyclodiphosphate (ME-CPP) with a corresponding release of cytidine 5-monophosphate (CMP). This chain is 2-C-methyl-D-erythritol 2,4-cyclodiphosphate synthase, found in Clostridium novyi (strain NT).